Here is a 4490-residue protein sequence, read N- to C-terminus: Dynein axonemal heavy chain 8 (4490 aa).

A Phosphoserine modification is found at Ser674. 4 AAA regions span residues 1808–2030 (YQNE…VLRT), 2090–2309 (NAVA…KLNL), 2416–2669 (YYPT…IWQG), and 2780–3034 (QFNE…YRRR). Residues 1846–1853 (GPAGTGKT) and 2128–2135 (GPSGSGKT) contribute to the ATP site. Residues 3049 to 3346 (YKNIYAEKVK…MDLLNDADTC (298 aa)) form a stalk region. 3 coiled-coil regions span residues 3072–3164 (DKLM…ALNT), 3290–3354 (LKAN…QAAS), and 3594–3630 (RRVI…DNLL). AAA stretches follow at residues 3432–3662 (LVDP…EVSE) and 3877–4091 (ARKY…FIQN).

This sequence belongs to the dynein heavy chain family. In terms of assembly, consists of at least two heavy chains and a number of intermediate and light chains. In terms of tissue distribution, expressed in spermatozoa (at protein level). Not detected in airway epithelial cells (at protein level).

Its subcellular location is the cytoplasm. The protein localises to the cytoskeleton. It localises to the flagellum axoneme. Force generating protein component of the outer dynein arms (ODAs) in the sperm flagellum. Produces force towards the minus ends of microtubules. Dynein has ATPase activity; the force-producing power stroke is thought to occur on release of ADP. Involved in sperm motility; implicated in sperm flagellar assembly. The chain is Dynein axonemal heavy chain 8 from Homo sapiens (Human).